The chain runs to 347 residues: tRNA N6-adenosine threonylcarbamoyltransferase (347 aa).

2 residues coordinate Fe cation: H113 and H117. Substrate contacts are provided by residues 136 to 140 (IVSGG), D170, G183, D187, and N282. D310 is a Fe cation binding site.

This sequence belongs to the KAE1 / TsaD family. Requires Fe(2+) as cofactor.

The protein resides in the cytoplasm. It carries out the reaction L-threonylcarbamoyladenylate + adenosine(37) in tRNA = N(6)-L-threonylcarbamoyladenosine(37) in tRNA + AMP + H(+). In terms of biological role, required for the formation of a threonylcarbamoyl group on adenosine at position 37 (t(6)A37) in tRNAs that read codons beginning with adenine. Is involved in the transfer of the threonylcarbamoyl moiety of threonylcarbamoyl-AMP (TC-AMP) to the N6 group of A37, together with TsaE and TsaB. TsaD likely plays a direct catalytic role in this reaction. In Bifidobacterium adolescentis (strain ATCC 15703 / DSM 20083 / NCTC 11814 / E194a), this protein is tRNA N6-adenosine threonylcarbamoyltransferase.